Consider the following 362-residue polypeptide: Chalcone synthase A (362 aa).

Cys168 is an active-site residue.

It belongs to the thiolase-like superfamily. Chalcone/stilbene synthases family.

The enzyme catalyses (E)-4-coumaroyl-CoA + 3 malonyl-CoA + 3 H(+) = 2',4,4',6'-tetrahydroxychalcone + 3 CO2 + 4 CoA. The protein operates within secondary metabolite biosynthesis; flavonoid biosynthesis. In terms of biological role, the primary product of this enzyme is 4,2',4',6'-tetrahydroxychalcone (also termed naringenin-chalcone or chalcone) which can under specific conditions spontaneously isomerize into naringenin. The protein is Chalcone synthase A (CHSA) of Ipomoea platensis (Morning glory).